Here is a 154-residue protein sequence, read N- to C-terminus: Large ribosomal subunit protein uL13 (154 aa).

This sequence belongs to the universal ribosomal protein uL13 family. In terms of assembly, part of the 50S ribosomal subunit.

This protein is one of the early assembly proteins of the 50S ribosomal subunit, although it is not seen to bind rRNA by itself. It is important during the early stages of 50S assembly. In Mesorhizobium japonicum (strain LMG 29417 / CECT 9101 / MAFF 303099) (Mesorhizobium loti (strain MAFF 303099)), this protein is Large ribosomal subunit protein uL13.